We begin with the raw amino-acid sequence, 475 residues long: MKNYETVIGLEVHVELATKTKIFCACSTAFGGAPNTHTCPVCTGQPGSLPVLNKQVVEYAVAVGLATNCTITQYSKFDRKNYFYPDNPQNYQISQLYLPICRNGSVEIETANGKKNVRIHEIHMEEDAGKLVHDEWEDVSIVDYNRSGVPLIEIVSEPDMRSAEEVIAYLETLRQTIQYLGASDCKLNEGSMRADVNISVREVGAKKFGTRTEMKNLNSFKAIAHAIEGERERQIELLEMGRKVVQETRRWDDNKESSHAMRSKEDAQDYRYFPEPDLVPIVVSDEWIAQIKAKQPELRPQKLARYKKEYDIPEYDAKILTESKHMADIFEAATKLCGKPKKVSNWLMVETMRLLKDNDMDADAIKFSPVNLAKLVDLVDAGTINSSVAKEVFEKIFREDIDPEQYVEENGLKSMNDEGELKVTIQAVIDANPQAVEDYHNGKKKAIGALVGQTMKATKGKANPAVVNKLLMELL.

It belongs to the GatB/GatE family. GatB subfamily. In terms of assembly, heterotrimer of A, B and C subunits.

The catalysed reaction is L-glutamyl-tRNA(Gln) + L-glutamine + ATP + H2O = L-glutaminyl-tRNA(Gln) + L-glutamate + ADP + phosphate + H(+). It catalyses the reaction L-aspartyl-tRNA(Asn) + L-glutamine + ATP + H2O = L-asparaginyl-tRNA(Asn) + L-glutamate + ADP + phosphate + 2 H(+). Its function is as follows. Allows the formation of correctly charged Asn-tRNA(Asn) or Gln-tRNA(Gln) through the transamidation of misacylated Asp-tRNA(Asn) or Glu-tRNA(Gln) in organisms which lack either or both of asparaginyl-tRNA or glutaminyl-tRNA synthetases. The reaction takes place in the presence of glutamine and ATP through an activated phospho-Asp-tRNA(Asn) or phospho-Glu-tRNA(Gln). This Agathobacter rectalis (strain ATCC 33656 / DSM 3377 / JCM 17463 / KCTC 5835 / VPI 0990) (Eubacterium rectale) protein is Aspartyl/glutamyl-tRNA(Asn/Gln) amidotransferase subunit B.